A 438-amino-acid chain; its full sequence is Thymidine phosphorylase (438 aa).

Belongs to the thymidine/pyrimidine-nucleoside phosphorylase family. In terms of assembly, homodimer.

The catalysed reaction is thymidine + phosphate = 2-deoxy-alpha-D-ribose 1-phosphate + thymine. It functions in the pathway pyrimidine metabolism; dTMP biosynthesis via salvage pathway; dTMP from thymine: step 1/2. The enzymes which catalyze the reversible phosphorolysis of pyrimidine nucleosides are involved in the degradation of these compounds and in their utilization as carbon and energy sources, or in the rescue of pyrimidine bases for nucleotide synthesis. The chain is Thymidine phosphorylase from Sinorhizobium medicae (strain WSM419) (Ensifer medicae).